The chain runs to 480 residues: MSEKETNYVENLLTQLENELNEDNLPEDINTLLRKCSLNLVTVVSLPDMDVKPLLATIKRFLTSNVSYDSLNYDYLLDVVDKLVPMADFDDVLEVYSAEDLVKALRSEIDPLKVAACRVIENSQPKGLFATSNIIDILLDILFDEKVENDKLITAIEKALERLSTDELIRRRLFDNNLPYLVSVKGRMETVSFVRLIDFLTIEFQFISGPEFKDIIFCFTKEEILKSVEDILVFIELVNYYTKFLLEIRNQDKYWALRHVKKILPVFAQLFEDTENYPDVRAFSTNCLLQLFAEVSRIEEDEYSLFKTMDKDSLKIGSEAKLITEWLELINPQYLVKYHKDVVENYFHVSGYSIGMLRNLSADEECFNAIRNKFSAEIVLRLPYLEQMQVVETLTRYEYTSKFLLNEMPKVMGSLIGDGSAGAIIDLETVHYRNSALRNLLDKGEEKLSVWYEPLLREYSKAVNGKNYSTGSETKIADCR.

This sequence belongs to the proteasome subunit S5B/HSM3 family. Interacts with RPT1, RPT2, RPT3, RPT5, RPT6, RPN1 and RPN2. Part of transient complex (BP1) containing HSM3, RPT1, RPT2 and RPT5 formed during the assembly of the 26S proteasome.

Its subcellular location is the cytoplasm. Functionally, involved in DNA mismatch repair in slow-growing cells. Acts as a chaperone during the assembly of the 26S proteasome, specifically of the base subcomplex of the 19S regulatory complex (RC). This Saccharomyces cerevisiae (strain ATCC 204508 / S288c) (Baker's yeast) protein is DNA mismatch repair protein HSM3 (HSM3).